The following is a 77-amino-acid chain: Mu-conotoxin BuIIIA (77 aa).

A signal peptide spans Met-1–Pro-22. Residues Gln-23–Arg-51 constitute a propeptide that is removed on maturation. Residues Asp-26 to Ser-46 are disordered. The segment covering Pro-28–Asp-38 has biased composition (basic and acidic residues). 3 disulfides stabilise this stretch: Cys-56/Cys-67, Cys-57/Cys-73, and Cys-63/Cys-74. Cys-74 carries the post-translational modification Cysteine amide.

The protein belongs to the conotoxin M superfamily. In terms of tissue distribution, expressed by the venom duct.

The protein localises to the secreted. Functionally, mu-conotoxins block voltage-gated sodium channels (Nav). This synthetic toxin potently blocks rNav1.2/SCN2A, and rNav1.4/SCN4A. It also moderately blocks rNav1.1/SCN1A, rNav1.3/SCN3A, rNav1.5/SCN5A, and mNav1.6/SCN8A. The inhibition is reversible. This Conus bullatus (Bubble cone) protein is Mu-conotoxin BuIIIA.